Here is a 361-residue protein sequence, read N- to C-terminus: Homocitrate synthase (361 aa).

The region spanning 1-249 is the Pyruvate carboxyltransferase domain; the sequence is MILDSTLREG…VKKYRLDKLY (249 aa). Arg-8 is a 2-oxoglutarate binding site. Glu-9 contacts Mg(2+). Positions 68, 128, and 162 each coordinate 2-oxoglutarate. Mg(2+)-binding residues include His-188 and His-190. His-282 serves as the catalytic Proton acceptor.

It belongs to the alpha-IPM synthase/homocitrate synthase family. Homocitrate synthase LYS20/LYS21 subfamily. Mg(2+) serves as cofactor. The cofactor is Mn(2+).

It catalyses the reaction acetyl-CoA + 2-oxoglutarate + H2O = (2R)-homocitrate + CoA + H(+). It functions in the pathway amino-acid biosynthesis; L-lysine biosynthesis via AAA pathway; L-alpha-aminoadipate from 2-oxoglutarate: step 1/5. Functionally, catalyzes the aldol-type condensation of 2-oxoglutarate with acetyl-CoA to yield homocitrate. Carries out the first step of the alpha-aminoadipate (AAA) lysine biosynthesis pathway. This is Homocitrate synthase from Pyrococcus horikoshii (strain ATCC 700860 / DSM 12428 / JCM 9974 / NBRC 100139 / OT-3).